We begin with the raw amino-acid sequence, 194 residues long: 7-methyl-GTP pyrophosphatase (194 aa).

Residue D69 is the Proton acceptor of the active site.

This sequence belongs to the Maf family. YceF subfamily. Requires a divalent metal cation as cofactor.

It localises to the cytoplasm. The enzyme catalyses N(7)-methyl-GTP + H2O = N(7)-methyl-GMP + diphosphate + H(+). Its function is as follows. Nucleoside triphosphate pyrophosphatase that hydrolyzes 7-methyl-GTP (m(7)GTP). May have a dual role in cell division arrest and in preventing the incorporation of modified nucleotides into cellular nucleic acids. This Shigella boydii serotype 4 (strain Sb227) protein is 7-methyl-GTP pyrophosphatase (yceF1).